Here is a 339-residue protein sequence, read N- to C-terminus: Pleckstrin homology domain protein opy1 (339 aa).

The PH 1 domain occupies 25-119 (RVLKSGWLIK…WVHVLRSTTG (95 aa)). Residues 141-167 (ESEPNVQISDTDFDNISTEPRNQTTSP) show a composition bias toward polar residues. The tract at residues 141-170 (ESEPNVQISDTDFDNISTEPRNQTTSPLDL) is disordered. One can recognise a PH 2 domain in the interval 233 to 330 (KVLMQGTIHW…WVAALKTSID (98 aa)).

As to quaternary structure, interacts (via domain PH 1) with phosphatidylinositol 4-phosphate 5-kinase its3; the interaction is direct but opy1 does not appear to regulate its3 localization or function.

It localises to the cell tip. The protein localises to the cell membrane. Binds phosphatidylinositol 4,5-bisphosphate (PtdIns(4,5)P2/PIP2) at the cell membrane. This is Pleckstrin homology domain protein opy1 from Schizosaccharomyces pombe (strain 972 / ATCC 24843) (Fission yeast).